The chain runs to 231 residues: Large ribosomal subunit protein uL1 (231 aa).

It belongs to the universal ribosomal protein uL1 family. In terms of assembly, part of the 50S ribosomal subunit.

In terms of biological role, binds directly to 23S rRNA. The L1 stalk is quite mobile in the ribosome, and is involved in E site tRNA release. Functionally, protein L1 is also a translational repressor protein, it controls the translation of the L11 operon by binding to its mRNA. The sequence is that of Large ribosomal subunit protein uL1 from Chlorobaculum tepidum (strain ATCC 49652 / DSM 12025 / NBRC 103806 / TLS) (Chlorobium tepidum).